The following is a 461-amino-acid chain: uncharacterized protein (461 aa).

The segment at 86 to 127 is disordered; that stretch reads KMKPNKDDDEEEDEDDEDDEDDEEEDNEEEDNEEENEITIAP. Acidic residues predominate over residues 92–122; that stretch reads DDDEEEDEDDEDDEDDEEEDNEEEDNEEENE. Coiled coils occupy residues 95–123 and 405–459; these read EEED…ENEI and NKYI…KLKK.

The protein belongs to the mimivirus L5 family.

This is an uncharacterized protein from Acanthamoeba polyphaga mimivirus (APMV).